Here is a 179-residue protein sequence, read N- to C-terminus: UPF0227 protein VIBHAR_01524 (179 aa).

It belongs to the UPF0227 family.

This is UPF0227 protein VIBHAR_01524 from Vibrio campbellii (strain ATCC BAA-1116).